Here is a 440-residue protein sequence, read N- to C-terminus: Origin recognition complex subunit 4 (440 aa).

64–71 (GPKGSGKS) lines the ATP pocket.

It belongs to the ORC4 family. As to quaternary structure, ORC is composed of six subunits.

Its subcellular location is the nucleus. Functionally, component of the origin recognition complex (ORC) that binds origins of replication. DNA-binding is ATP-dependent, however specific DNA sequences that define origins of replication have not been identified so far. ORC is required to assemble the pre-replication complex necessary to initiate DNA replication. The sequence is that of Origin recognition complex subunit 4 (orcD) from Dictyostelium discoideum (Social amoeba).